The primary structure comprises 216 residues: ADP-sugar pyrophosphatase (216 aa).

Methionine 1 carries the post-translational modification N-acetylmethionine. 2 positions are modified to phosphoserine: serine 3 and serine 10. Position 28 (tryptophan 28) interacts with substrate. A Glycyl lysine isopeptide (Lys-Gly) (interchain with G-Cter in SUMO2) cross-link involves residue lysine 42. Position 45 is a phosphothreonine (threonine 45). Substrate is bound by residues 46 to 47 and arginine 51; that span reads WE. Residues 57–194 enclose the Nudix hydrolase domain; sequence QTADGVAVIP…EEHLTVDARV (138 aa). Tyrosine 74 is subject to Phosphotyrosine. Arginine 84 provides a ligand contact to substrate. Alanine 96 contacts Mg(2+). The Nudix box signature appears at 97 to 118; sequence GLIDDGETPEAAALRELEEETG. Leucine 98 lines the substrate pocket. Residues glutamate 112 and glutamate 116 each contribute to the Mg(2+) site. Aspartate 133 contributes to the substrate binding site. A Mg(2+)-binding site is contributed by glutamate 163. 2 positions are modified to N6-acetyllysine: lysine 207 and lysine 215.

The protein belongs to the Nudix hydrolase family. Homodimer. Interacts with PARG. The cofactor is Mg(2+). In terms of processing, phosphorylation at Thr-45 is required for homodimer stability; dephosphorylation results in destabilization of the homodimer. Dephosphorylation at Thr-45 promotes the ATP-synthesis activity.

The protein resides in the nucleus. It carries out the reaction D-ribose 5-phosphate + ATP + H(+) = ADP-D-ribose + diphosphate. It catalyses the reaction ADP-D-ribose + H2O = D-ribose 5-phosphate + AMP + 2 H(+). The enzyme catalyses 8-oxo-dGDP + H2O = 8-oxo-dGMP + phosphate + H(+). In terms of biological role, enzyme that can either act as an ADP-sugar pyrophosphatase in absence of diphosphate or catalyze the synthesis of ATP in presence of diphosphate. In absence of diphosphate, hydrolyzes with similar activities various modified nucleoside diphosphates such as ADP-ribose, ADP-mannose, ADP-glucose, 8-oxo-GDP and 8-oxo-dGDP. Can also hydrolyze other nucleotide sugars with low activity. In presence of diphosphate, mediates the synthesis of ATP in the nucleus by catalyzing the conversion of ADP-ribose to ATP and ribose 5-phosphate. Nuclear ATP synthesis takes place when dephosphorylated at Thr-45. Nuclear ATP generation is required for extensive chromatin remodeling events that are energy-consuming. Does not play a role in U8 snoRNA decapping activity. Binds U8 snoRNA. The protein is ADP-sugar pyrophosphatase of Pongo abelii (Sumatran orangutan).